We begin with the raw amino-acid sequence, 321 residues long: Collectin-43 (321 aa).

A signal peptide spans 1 to 20 (MLPLPLSILLLLTQSQSFLG). The interval 43 to 163 (PADSLRGHDG…GEKGARGETS (121 aa)) is disordered. Residues 47 to 65 (LRGHDGRDGKEGPQGEKGD) show a composition bias toward basic and acidic residues. Positions 49-162 (GHDGRDGKEG…PGEKGARGET (114 aa)) constitute a Collagen-like domain. Composition is skewed to gly residues over residues 100–109 (GPEGGVGAPG) and 124–133 (GTPGPGGAIG). Basic and acidic residues predominate over residues 147–159 (KGDRGDPGEKGAR). Positions 222–321 (QLCREAKGQL…REERLVICEF (100 aa)) constitute a C-type lectin domain. Intrachain disulfides connect C224-C319 and C297-C311.

The protein belongs to the SFTPD family. In terms of assembly, oligomeric complex of 4 set of homotrimers. In terms of processing, hydroxylated. Liver specific.

Its subcellular location is the secreted. Its function is as follows. Lectin that binds to various sugars: mannose = ManNAc &gt; fucose &gt; GlcNAc &gt; glucose = maltose &gt; galactose &gt; lactose &gt; GalNAc. Could play a role in immune defense. In Bos taurus (Bovine), this protein is Collectin-43 (CL43).